Reading from the N-terminus, the 191-residue chain is Cathelicidin-related peptide Oh-Cath (191 aa).

The first 22 residues, 1 to 22 (MEGFFWKTLLVVGALAIGGTSS), serve as a signal peptide directing secretion. The propeptide occupies 23-161 (LPHKPLTYEE…DQPRRVKRFK (139 aa)). Intrachain disulfides connect Cys-81-Cys-92 and Cys-103-Cys-120. Over residues 125–151 (EEEEQKQEEGNEEEKEVEKEEKEEDEK) the composition is skewed to acidic residues. The disordered stretch occupies residues 125–154 (EEEEQKQEEGNEEEKEVEKEEKEEDEKDQP).

The protein belongs to the cathelicidin family. Expressed by the venom gland.

It is found in the secreted. The protein localises to the target cell membrane. Potent antimicrobial peptide against Gram-negative (MIC=0.25 ug/ml against E.coli ATCC 25922, MIC=0.5 ug/ml against P.aeruginosa) and Gram-positive bacteria (MIC=64 ug/ml against E.faecalis, MIC=64 ug/ml against S.aureus). Adopts an amphipathic alpha helical conformation, that may allow to partition into the target membrane. Low hemolytic activities have been observed on mammalian cells. The chain is Cathelicidin-related peptide Oh-Cath from Ophiophagus hannah (King cobra).